We begin with the raw amino-acid sequence, 349 residues long: Guanine nucleotide-binding protein alpha-13 subunit (349 aa).

Residue Gly2 is the site of N-myristoyl glycine attachment. Cys3 carries the S-palmitoyl cysteine lipid modification. The G-alpha domain occupies 35-349 (SHIRLLLLGS…VFKDIMKRKR (315 aa)). Positions 38-51 (RLLLLGSAESGKTT) are G1 motif. Residues 43 to 50 (GSAESGKT), 177 to 183 (IMAYVPT), 202 to 206 (DIGGQ), 271 to 274 (NEID), and Ala327 contribute to the GTP site. The G2 motif stretch occupies residues 175–183 (DLIMAYVPT). Residue Thr183 coordinates Mg(2+). The segment at 198-207 (FQLFDIGGQK) is G3 motif. Residues 267-274 (YLFLNEID) form a G4 motif region. The interval 325 to 330 (CIAIDT) is G5 motif.

It belongs to the G-alpha family. In terms of assembly, g proteins are composed of 3 units; alpha, beta and gamma. The alpha chain contains the guanine nucleotide binding site.

Guanine nucleotide-binding proteins (G proteins) are involved as modulators or transducers in various transmembrane signaling systems. In Caenorhabditis briggsae, this protein is Guanine nucleotide-binding protein alpha-13 subunit.